Here is a 479-residue protein sequence, read N- to C-terminus: Endoglucanase 20 (479 aa).

The N-terminal stretch at 1-21 (MGKLLVLMLVGMFLAFESLEA) is a signal peptide. N29 is a glycosylation site (N-linked (GlcNAc...) asparagine). D76 acts as the Nucleophile in catalysis. H398 is a catalytic residue. N442 carries N-linked (GlcNAc...) asparagine glycosylation. Catalysis depends on residues D449 and E458.

Belongs to the glycosyl hydrolase 9 (cellulase E) family.

It is found in the secreted. The catalysed reaction is Endohydrolysis of (1-&gt;4)-beta-D-glucosidic linkages in cellulose, lichenin and cereal beta-D-glucans.. The polypeptide is Endoglucanase 20 (Arabidopsis thaliana (Mouse-ear cress)).